Here is a 406-residue protein sequence, read N- to C-terminus: CCA-adding enzyme (406 aa).

Residues Gly32 and Arg35 each contribute to the ATP site. Positions 32 and 35 each coordinate CTP. Mg(2+)-binding residues include Asp45 and Asp47. Arg116, Asp159, Arg162, Arg165, and Arg168 together coordinate ATP. Residues Arg116, Asp159, Arg162, Arg165, and Arg168 each coordinate CTP.

The protein belongs to the tRNA nucleotidyltransferase/poly(A) polymerase family. Bacterial CCA-adding enzyme type 3 subfamily. Homodimer. Mg(2+) is required as a cofactor.

It catalyses the reaction a tRNA precursor + 2 CTP + ATP = a tRNA with a 3' CCA end + 3 diphosphate. The enzyme catalyses a tRNA with a 3' CCA end + 2 CTP + ATP = a tRNA with a 3' CCACCA end + 3 diphosphate. Its function is as follows. Catalyzes the addition and repair of the essential 3'-terminal CCA sequence in tRNAs without using a nucleic acid template. Adds these three nucleotides in the order of C, C, and A to the tRNA nucleotide-73, using CTP and ATP as substrates and producing inorganic pyrophosphate. tRNA 3'-terminal CCA addition is required both for tRNA processing and repair. Also involved in tRNA surveillance by mediating tandem CCA addition to generate a CCACCA at the 3' terminus of unstable tRNAs. While stable tRNAs receive only 3'-terminal CCA, unstable tRNAs are marked with CCACCA and rapidly degraded. In Enterococcus faecalis (strain ATCC 700802 / V583), this protein is CCA-adding enzyme.